The chain runs to 131 residues: Profilin-6 (131 aa).

The protein belongs to the profilin family. In terms of assembly, occurs in many kinds of cells as a complex with monomeric actin in a 1:1 ratio.

It localises to the cytoplasm. It is found in the cytoskeleton. In terms of biological role, binds to actin and affects the structure of the cytoskeleton. At high concentrations, profilin prevents the polymerization of actin, whereas it enhances it at low concentrations. By binding to PIP2, it inhibits the formation of IP3 and DG. The polypeptide is Profilin-6 (Hevea brasiliensis (Para rubber tree)).